The chain runs to 325 residues: Necdin (325 aa).

Disordered regions lie at residues 1–69 (MSEQ…IEDV) and 77–96 (AAEE…IPAP). One can recognise an MAGE domain in the interval 102–301 (LVQKAHELMW…QAWPSRYREA (200 aa)).

In terms of assembly, binds to the transactivation domains of E2F1 and p53. Binds also SV40 large T antigen and adenovirus E1A. Interacts with nucleobindin 1 and 2. As to expression, brain specific. Not detected in other tissues. Expressed in postmitotic neurons. In adult brain the highest expression is in hypothalamus. Highly expressed in thalamus and midbrain. Relatively low levels are in cerebral cortex, hippocampus, striatum, olfactory bulb, cerebellum, pons and spinal cord. Also detected in neurally differentiated embryonal carcinoma cells.

Its subcellular location is the cytoplasm. It is found in the nucleus. It localises to the nucleoplasm. The protein localises to the nucleus matrix. In terms of biological role, growth suppressor that facilitates the entry of the cell into cell cycle arrest. Functionally similar to the retinoblastoma protein it binds to and represses the activity of cell-cycle-promoting proteins such as SV40 large T antigen, adenovirus E1A, and the transcription factor E2F. Necdin also interacts with p53 and works in an additive manner to inhibit cell growth. Also functions as a transcription factor and directly binds to specific guanosine-rich DNA sequences. This chain is Necdin (Ndn), found in Mus musculus (Mouse).